The following is a 201-amino-acid chain: Probable molybdenum cofactor guanylyltransferase (201 aa).

Residues 16-18 (LAG), K28, D75, and D107 each bind GTP. D107 lines the Mg(2+) pocket.

Belongs to the MobA family. The cofactor is Mg(2+).

The protein resides in the cytoplasm. It catalyses the reaction Mo-molybdopterin + GTP + H(+) = Mo-molybdopterin guanine dinucleotide + diphosphate. In terms of biological role, transfers a GMP moiety from GTP to Mo-molybdopterin (Mo-MPT) cofactor (Moco or molybdenum cofactor) to form Mo-molybdopterin guanine dinucleotide (Mo-MGD) cofactor. In Mycobacterium ulcerans (strain Agy99), this protein is Probable molybdenum cofactor guanylyltransferase.